Here is a 500-residue protein sequence, read N- to C-terminus: Xylan O-acetyltransferase 2 (500 aa).

Over 1–25 (MGLPGRRNPLLSARRAAASLRRSRR) the chain is Cytoplasmic. The chain crosses the membrane as a helical; Signal-anchor for type II membrane protein span at residues 26–43 (LPVYVAAVFFVASVLLMF). The Lumenal segment spans residues 44–500 (RDEILYLTTA…RPPAAAGHVA (457 aa)). The segment at 84-116 (PVLLGHGGKPEKHHSVTERHRPKVSAKRRPNKK) is disordered. The span at 91 to 102 (GKPEKHHSVTER) shows a compositional bias: basic and acidic residues. Over residues 103-116 (HRPKVSAKRRPNKK) the composition is skewed to basic residues. Intrachain disulfides connect Cys143–Cys194, Cys165–Cys231, Cys174–Cys472, and Cys388–Cys468. N-linked (GlcNAc...) asparagine glycans are attached at residues Asn144 and Asn154. Residues 218–220 (GDS) carry the GDS motif motif. The Nucleophile role is filled by Ser220. Asn260 and Asn416 each carry an N-linked (GlcNAc...) asparagine glycan. Asp467 acts as the Proton donor in catalysis. The DXXH motif motif lies at 467–470 (DCIH). The active-site Proton acceptor is the His470.

This sequence belongs to the PC-esterase family. TBL subfamily. In terms of tissue distribution, expressed at low levels in roots and leaves.

The protein localises to the golgi apparatus membrane. Functionally, xylan acetyltransferase required for 2-O- and 3-O-monoacetylation of xylosyl residues in xylan. Catalyzes the 2-O-acetylation of xylan, followed by nonenzymatic acetyl migration to the O-3 position, resulting in products that are monoacetylated at both O-2 and O-3 positions. The chain is Xylan O-acetyltransferase 2 from Oryza sativa subsp. japonica (Rice).